A 274-amino-acid polypeptide reads, in one-letter code: Methylamine utilization protein MauF (274 aa).

7 consecutive transmembrane segments (helical) span residues 30–50, 52–72, 105–125, 127–147, 176–196, 202–222, and 253–273; these read WTRA…ALAM, AAHV…LSTW, LGYA…GGIA, LSGF…LAYG, WVVG…YVQT, VTAA…IAIF, and AAIA…MLAL.

It is found in the cell membrane. The protein operates within one-carbon metabolism; methylamine degradation. This chain is Methylamine utilization protein MauF (mauF), found in Paracoccus versutus (Thiobacillus versutus).